Consider the following 50-residue polypeptide: Ampulexin 2 (50 aa).

The N-terminal stretch at methionine 1–proline 26 is a signal peptide.

In terms of assembly, dimer; disulfide-linked. Expressed in venom sac and, to a lesser extent, in venom gland. Not expressed in brain.

The protein localises to the secreted. Its function is as follows. Amphipathic peptide which probably adopts an alpha-helical structure. Has no antimicrobial activity against E.coli DH5alpha or B.thuringiensis. Is not cytotoxic in vitro. The protein is Ampulexin 2 of Ampulex compressa (Emerald cockroach wasp).